Reading from the N-terminus, the 526-residue chain is Tyrosine 2,3-aminomutase (526 aa).

The active-site Proton donor/acceptor is Tyr-41. Substrate is bound at residue His-71. Positions 130-132 (ASG) form a cross-link, 5-imidazolinone (Ala-Gly). Ser-131 carries the post-translational modification 2,3-didehydroalanine (Ser). Positions 183 and 288 each coordinate substrate.

It belongs to the TAL/TAM family. In terms of assembly, homotetramer; dimer of dimers. Post-translationally, contains an active site 4-methylidene-imidazol-5-one (MIO), which is formed autocatalytically by cyclization and dehydration of residues Ala-Ser-Gly.

The enzyme catalyses L-tyrosine = 3-amino-3-(4-hydroxyphenyl)propanoate. It catalyses the reaction L-tyrosine = (E)-4-coumarate + NH4(+). Functionally, has aminomutase and, to a much lesser extent, ammonia-lyase activity. Primarily, catalyzes the rearrangement of L-tyrosine to S-beta-tyrosine, which is probably incorporated into secondary metabolite myxovalargin. The aminomutase activity exclusively produces S-beta-tyrosine. The sequence is that of Tyrosine 2,3-aminomutase from Myxococcus sp. (strain Mx-B0).